Here is a 261-residue protein sequence, read N- to C-terminus: 1,6-dihydroxycyclohexa-2,4-diene-1-carboxylate dehydrogenase (261 aa).

Residue Ile-13–Ile-37 participates in NAD(+) binding. Ser-145 provides a ligand contact to substrate. Tyr-156 functions as the Proton acceptor in the catalytic mechanism.

This sequence belongs to the short-chain dehydrogenases/reductases (SDR) family. Homodimer.

The enzyme catalyses (1R,6S)-1,6-dihydroxycyclohexa-2,4-diene-1-carboxylate + NAD(+) = catechol + CO2 + NADH. Its pathway is aromatic compound metabolism; benzoate degradation via hydroxylation; catechol from benzoate: step 2/2. Its function is as follows. Degradation of 2-hydro-1,2-dihydroxy benzoate (DHB) to catechol. The protein is 1,6-dihydroxycyclohexa-2,4-diene-1-carboxylate dehydrogenase (benD) of Acinetobacter baylyi (strain ATCC 33305 / BD413 / ADP1).